The sequence spans 207 residues: 2,3-bisphosphoglycerate-dependent phosphoglycerate mutase (207 aa).

Substrate-binding positions include 9–16, 22–23, arginine 61, 88–91, lysine 99, 115–116, and 159–160; these read RHGQSDWN, TG, ERDY, RR, and GN. Histidine 10 (tele-phosphohistidine intermediate) is an active-site residue. The active-site Proton donor/acceptor is glutamate 88.

It belongs to the phosphoglycerate mutase family. BPG-dependent PGAM subfamily. As to quaternary structure, homodimer.

The catalysed reaction is (2R)-2-phosphoglycerate = (2R)-3-phosphoglycerate. Its pathway is carbohydrate degradation; glycolysis; pyruvate from D-glyceraldehyde 3-phosphate: step 3/5. Catalyzes the interconversion of 2-phosphoglycerate and 3-phosphoglycerate. This chain is 2,3-bisphosphoglycerate-dependent phosphoglycerate mutase, found in Beijerinckia indica subsp. indica (strain ATCC 9039 / DSM 1715 / NCIMB 8712).